Consider the following 313-residue polypeptide: Ribosomal protein L11 methyltransferase (313 aa).

S-adenosyl-L-methionine is bound by residues threonine 154, glycine 179, aspartate 201, and asparagine 242.

Belongs to the methyltransferase superfamily. PrmA family.

It is found in the cytoplasm. The enzyme catalyses L-lysyl-[protein] + 3 S-adenosyl-L-methionine = N(6),N(6),N(6)-trimethyl-L-lysyl-[protein] + 3 S-adenosyl-L-homocysteine + 3 H(+). In terms of biological role, methylates ribosomal protein L11. The chain is Ribosomal protein L11 methyltransferase from Xanthomonas oryzae pv. oryzae (strain MAFF 311018).